The chain runs to 316 residues: MQEFSLWCDFIERDFLENDFLKLINKGAICGATSNPSLFCEAITKSAFYQDEIAKLKGKKAKEIYETLALKDILQASSALMPLYEKDPNNGYISLEIDPFLEDDAIKSIDEAKRLFKTLNRPNVMIKVPASESGLEVISALAQASIPINVTLVFSPKIAGEIAQILAKEAQKRAVISVFVSRFDKEIDPLAPQNLQAQSGIMNATECYYQINQHANKLISALFASTGVKSNALAKDYYIKALCFKNSINTAPLEALNAYLLDPNTEYQTPLKITEIEAFKKELKAHNIDLENTAQKLLKEGLIAFKQSFEKLLSSF.

The Schiff-base intermediate with substrate role is filled by lysine 127.

The protein belongs to the transaldolase family. Type 2 subfamily.

The protein resides in the cytoplasm. It carries out the reaction D-sedoheptulose 7-phosphate + D-glyceraldehyde 3-phosphate = D-erythrose 4-phosphate + beta-D-fructose 6-phosphate. Its pathway is carbohydrate degradation; pentose phosphate pathway; D-glyceraldehyde 3-phosphate and beta-D-fructose 6-phosphate from D-ribose 5-phosphate and D-xylulose 5-phosphate (non-oxidative stage): step 2/3. Its function is as follows. Transaldolase is important for the balance of metabolites in the pentose-phosphate pathway. The protein is Transaldolase of Helicobacter pylori (strain HPAG1).